The sequence spans 336 residues: F420-dependent glucose-6-phosphate dehydrogenase (336 aa).

D39 serves as a coordination point for coenzyme F420-(gamma-Glu)n. The active-site Proton donor is the H40. Residues T76 and 107–108 (TG) each bind coenzyme F420-(gamma-Glu)n. Catalysis depends on E109, which acts as the Proton acceptor. Coenzyme F420-(gamma-Glu)n-binding positions include N112, 177–178 (GG), and 180–181 (AV). The substrate site is built by T195, K198, K259, and R283.

The protein belongs to the F420-dependent glucose-6-phosphate dehydrogenase family. Homodimer.

The enzyme catalyses oxidized coenzyme F420-(gamma-L-Glu)(n) + D-glucose 6-phosphate + H(+) = 6-phospho-D-glucono-1,5-lactone + reduced coenzyme F420-(gamma-L-Glu)(n). Its function is as follows. Catalyzes the coenzyme F420-dependent oxidation of glucose 6-phosphate (G6P) to 6-phosphogluconolactone. Appears to have a role in resistance to oxidative stress, via its consumption of G6P that serves as a source of reducing power to combat oxidative stress in mycobacteria. More precisely, is likely involved in a F420-dependent anti-oxidant mechanism that protects M.tuberculosis against oxidative stress and bactericidal agents. Functionally, is essential for the bioreductive activation of the bicyclic 4-nitroimidazole prodrug PA-824 (nitroimidazo-oxazine) developed for anti-tuberculosis therapy against both replicating and persistent bacteria. It does not interact directly with PA-824 but, rather, provides reduced F420 to the deazaflavin-dependent nitroreductase Ddn, which in turn activates PA-824. The chain is F420-dependent glucose-6-phosphate dehydrogenase (fgd1) from Mycobacterium tuberculosis (strain CDC 1551 / Oshkosh).